Here is a 1021-residue protein sequence, read N- to C-terminus: Ephrin type-B receptor 6 (1021 aa).

The signal sequence occupies residues 1-31 (MATEGAAQLGNRVAGMVCSLWVLLLVSSVLA). At 32–594 (LEEVLLDTTG…LSSQLPERLS (563 aa)) the chain is on the extracellular side. Residues 33–237 (EEVLLDTTGE…FSYTCPAVLR (205 aa)) form the Eph LBD domain. Residues 163 to 182 (SFPSSSSSSSSSSSAAWAVG) are disordered. Positions 166–176 (SSSSSSSSSSS) are enriched in low complexity. Fibronectin type-III domains follow at residues 369–486 (PPSA…TSHE) and 487–582 (VPSA…TLPQ). A glycan (N-linked (GlcNAc...) asparagine) is linked at N480. Residues 595 to 615 (LVIGSILGALAFLLLAAITVL) form a helical membrane-spanning segment. The Cytoplasmic portion of the chain corresponds to 616–1021 (AVVFQRKRRG…HLRQQGSVEV (406 aa)). The Protein kinase domain occupies 670-919 (IKIEEVIGTG…QLVAAFDKMI (250 aa)). ATP is bound at residue 676-684 (IGTGSFGEV). An SAM domain is found at 948–1012 (PCLDSPQAWL…LHHIQLLQQH (65 aa)). Residues 1019-1021 (VEV) carry the PDZ-binding motif.

It belongs to the protein kinase superfamily. Tyr protein kinase family. Ephrin receptor subfamily. In terms of assembly, interacts with CBL and EPHB1. Interacts with FYN; this interaction takes place in a ligand-independent manner. In terms of processing, ligand-binding increases phosphorylation on tyrosine residues. Phosphorylation on tyrosine residues is mediated by transphosphorylation by the catalytically active EPHB1 in a ligand-independent manner. Tyrosine phosphorylation of the receptor may act as a switch on the functional transition from cell adhesion/attraction to de-adhesion/repulsion. In terms of tissue distribution, expressed in brain. Expressed in non invasive breast carcinoma cell lines (at protein level). Strong expression in brain and pancreas, and weak expression in other tissues, such as heart, placenta, lung, liver, skeletal muscle and kidney. Expressed in breast non invasive tumors but not in metastatic lesions. Isoform 3 is expressed in cell lines of glioblastomas, anaplastic astrocytomas, gliosarcomas and astrocytomas. Isoform 3 is not detected in normal tissues.

It localises to the membrane. The protein localises to the secreted. Functionally, kinase-defective receptor for members of the ephrin-B family. Binds to ephrin-B1 and ephrin-B2. Modulates cell adhesion and migration by exerting both positive and negative effects upon stimulation with ephrin-B2. Inhibits JNK activation, T-cell receptor-induced IL-2 secretion and CD25 expression upon stimulation with ephrin-B2. The chain is Ephrin type-B receptor 6 (EPHB6) from Homo sapiens (Human).